Reading from the N-terminus, the 691-residue chain is MIMVRRRARPAKETGGGSAAAAVASDGALSMDTAAAVAVAGGNHLLDDQYFASPKRKDCRLMKASENLKISSDVVALEEEANNKGVKPTKALTDRTIGVPLATRSQTRTIENFFKADAAAKCGITLNTHHPEPIKEQKTISTTELPLSDELGDEELERVVGDLLYDGHSTASSDSPSYQNENEHEEVMQDTFALRETSPVPVLMADFQTHRSGLRDSHSSSHSSSSSGGASATTDNIFLQEPVLTLDIDRTPTKASSIKINKSFELASAVFSSPPSVLNACRFNQIVTLNGGGQCEPQPVVVAQPQPQPQLQLPPHHNGFELDQHDSSSCDSGVACNLTISAESPAAGGGAGAAARRRKPATPHRILCPSPIKTLPRGDGGGLIVPGARKTSGIMMKGDLLSPRKSPRKLPTTTAAVAACKSRRRLNQPKPQAPYQPQQPQPPPGTQPTNEDVVAAEELENLNKIPIANSNKSNNHVKAMLKPAPAKPRAALTKGSKTKTGSKIQPGPLPLAATNGNREMTDFFPVRRSVRKTKTAVKEEWLRNLEQAVLEERSEGLQVRNFMGKGRGVVAVRHFKRNEFVVEYVGDLISISDATDRERRYALDENAGCYMYYFKHKNQQYCIDATVDTGKLGRLINHSRAGNLMTKVVVIKQRPHLVLLAKDDIAPGEELTYDYGDRSKESLLHHPWLAF.

Disordered stretches follow at residues 1–22 (MIMV…AAAA), 211–234 (RSGL…SATT), 345–381 (PAAG…GDGG), 422–450 (SRRR…QPTN), and 484–516 (APAK…ATNG). Residues 220–232 (SSHSSSSSGGASA) are compositionally biased toward low complexity. The segment covering 431-446 (PQAPYQPQQPQPPPGT) has biased composition (pro residues). Residues 484–503 (APAKPRAALTKGSKTKTGSK) are compositionally biased toward low complexity. The region spanning 555–676 (EGLQVRNFMG…PGEELTYDYG (122 aa)) is the SET domain. Residues 565–567 (KGR), tyrosine 610, and 637–638 (NH) contribute to the S-adenosyl-L-methionine site.

Belongs to the class V-like SAM-binding methyltransferase superfamily. Histone-lysine methyltransferase family. PR/SET subfamily.

It is found in the nucleus. The protein resides in the chromosome. The enzyme catalyses L-lysyl(20)-[histone H4] + S-adenosyl-L-methionine = N(6)-methyl-L-lysyl(20)-[histone H4] + S-adenosyl-L-homocysteine + H(+). Functionally, histone methyltransferase that specifically monomethylates 'Lys-20' of histone H4. H4 'Lys-20' monomethylation is enriched during mitosis and represents a specific tag for epigenetic transcriptional repression. Mainly functions in euchromatin regions, thereby playing a central role in the silencing of euchromatic genes. Required for cell proliferation, possibly by contributing to the maintenance of proper higher-order structure of DNA and chromosome condensation during mitosis. The sequence is that of Histone-lysine N-methyltransferase Set8 from Drosophila pseudoobscura pseudoobscura (Fruit fly).